Here is a 270-residue protein sequence, read N- to C-terminus: 3-methyl-2-oxobutanoate hydroxymethyltransferase (270 aa).

Residues aspartate 50 and aspartate 89 each contribute to the Mg(2+) site. 3-methyl-2-oxobutanoate is bound by residues aspartate 50–serine 51, aspartate 89, and lysine 118. Glutamate 120 is a binding site for Mg(2+). Glutamate 187 (proton acceptor) is an active-site residue.

Belongs to the PanB family. Homodecamer; pentamer of dimers. Mg(2+) serves as cofactor.

It localises to the cytoplasm. It catalyses the reaction 3-methyl-2-oxobutanoate + (6R)-5,10-methylene-5,6,7,8-tetrahydrofolate + H2O = 2-dehydropantoate + (6S)-5,6,7,8-tetrahydrofolate. Its pathway is cofactor biosynthesis; (R)-pantothenate biosynthesis; (R)-pantoate from 3-methyl-2-oxobutanoate: step 1/2. In terms of biological role, catalyzes the reversible reaction in which hydroxymethyl group from 5,10-methylenetetrahydrofolate is transferred onto alpha-ketoisovalerate to form ketopantoate. This Helicobacter pylori (strain Shi470) protein is 3-methyl-2-oxobutanoate hydroxymethyltransferase.